We begin with the raw amino-acid sequence, 441 residues long: Ribulose bisphosphate carboxylase large chain (441 aa).

Positions 89 and 139 each coordinate substrate. The Proton acceptor role is filled by Lys-141. Residue Lys-143 participates in substrate binding. Residues Lys-167, Asp-169, and Glu-170 each coordinate Mg(2+). The residue at position 167 (Lys-167) is an N6-carboxylysine. His-260 acts as the Proton acceptor in catalysis. Substrate is bound by residues Xaa-261, His-293, and Ser-345.

Belongs to the RuBisCO large chain family. Type I subfamily. As to quaternary structure, heterohexadecamer of 8 large chains and 8 small chains; disulfide-linked. The disulfide link is formed within the large subunit homodimers. It depends on Mg(2+) as a cofactor. In terms of processing, the disulfide bond which can form in the large chain dimeric partners within the hexadecamer appears to be associated with oxidative stress and protein turnover.

It is found in the plastid. Its subcellular location is the chloroplast. It catalyses the reaction 2 (2R)-3-phosphoglycerate + 2 H(+) = D-ribulose 1,5-bisphosphate + CO2 + H2O. The catalysed reaction is D-ribulose 1,5-bisphosphate + O2 = 2-phosphoglycolate + (2R)-3-phosphoglycerate + 2 H(+). RuBisCO catalyzes two reactions: the carboxylation of D-ribulose 1,5-bisphosphate, the primary event in carbon dioxide fixation, as well as the oxidative fragmentation of the pentose substrate in the photorespiration process. Both reactions occur simultaneously and in competition at the same active site. The chain is Ribulose bisphosphate carboxylase large chain from Apocynum cannabinum (Hemp dogbane).